The chain runs to 319 residues: Ninja-family protein AFP4 (319 aa).

Positions 39–54 are enriched in basic and acidic residues; the sequence is DSEHGENQQEAKKRED. Disordered stretches follow at residues 39–63, 99–120, and 205–228; these read DSEH…EKDV, FVFD…IVGR, and VTGP…NVEN.

Belongs to the Ninja family. Interacts with ABI5/DPBF1, AREB3/DPBF3, EEL/DPBF4, ABF1 and ABF3/DPBF5. As to expression, predominantly expressed in roots and seedlings.

The protein localises to the nucleus. Its function is as follows. Acts as a negative regulator of abscisic acid (ABA) and salinity responses. This chain is Ninja-family protein AFP4 (AFP4), found in Arabidopsis thaliana (Mouse-ear cress).